A 939-amino-acid chain; its full sequence is UvrABC system protein A (939 aa).

32-39 (GLSGSGKS) provides a ligand contact to ATP. The C4-type zinc finger occupies 252–279 (CPDCGISIGEISPSMFSFNAPFGKCDVC). ABC transporter domains follow at residues 309-588 (WGEG…KESI) and 608-936 (AGKN…QYLK). 640–647 (GVSGSGKS) lines the ATP pocket. The C4-type zinc finger occupies 739 to 765 (CEACKGDGIVRIEMQFLSDVYVPCDVC).

Belongs to the ABC transporter superfamily. UvrA family. In terms of assembly, forms a heterotetramer with UvrB during the search for lesions.

The protein resides in the cytoplasm. Functionally, the UvrABC repair system catalyzes the recognition and processing of DNA lesions. UvrA is an ATPase and a DNA-binding protein. A damage recognition complex composed of 2 UvrA and 2 UvrB subunits scans DNA for abnormalities. When the presence of a lesion has been verified by UvrB, the UvrA molecules dissociate. This Clostridium acetobutylicum (strain ATCC 824 / DSM 792 / JCM 1419 / IAM 19013 / LMG 5710 / NBRC 13948 / NRRL B-527 / VKM B-1787 / 2291 / W) protein is UvrABC system protein A.